Here is a 473-residue protein sequence, read N- to C-terminus: MKTDTPSLETPQAARLRRRQLIRQLLERDKTPLAILFMAAVVGTLVGLAAVAFDKGVAWLQNQRMGALVHTADNYPLLLTVAFLCSAVLAMFGYFLVRKYAPEAGGSGIPEIEGALEDQRPVRWWRVLPVKFFGGLGTLGGGMVLGREGPTVQIGGNIGRMVLDIFRLKGDEARHTLLATGAAAGLAAAFNAPLAGILFIIEEMRPQFRYTLISIKAVFIGVIMSTIMYRIFNHEVALIDVGKLSDAPLNTLWLYLILGIIFGIFGPIFNKWVLGMQDLLHRVHGGNITKWILMGGAIGGLCGLLGFVAPATSGGGFNLIPIATAGNFSMGMLVFIFVARVITTLLCFSSGAPGGIFAPMLALGTVLGTAFGMVAVELFPQYHLEAGTFAIAGMGALLAASIRAPLTGIILVLEMTDNYQLILPMIITGLGATLLAQFTGGKPLYSAILARTLAKQEAEQLARSKAASASENT.

The Cytoplasmic portion of the chain corresponds to 1–32 (MKTDTPSLETPQAARLRRRQLIRQLLERDKTP). A helical transmembrane segment spans residues 33–69 (LAILFMAAVVGTLVGLAAVAFDKGVAWLQNQRMGALV). Over 70–76 (HTADNYP) the chain is Periplasmic. The helical transmembrane segment at 77–100 (LLLTVAFLCSAVLAMFGYFLVRKY) threads the bilayer. The Selectivity filter part_1 motif lies at 106-110 (GSGIP). Ser-107 provides a ligand contact to chloride. The helical intramembrane region spans 109–116 (IPEIEGAL). At 117–123 (EDQRPVR) the chain is on the cytoplasmic side. The next 2 membrane-spanning stretches (helical) occupy residues 124-141 (WWRVLPVKFFGGLGTLGG) and 148-166 (EGPTVQIGGNIGRMVLDIF). Residues 146-150 (GREGP) carry the Selectivity filter part_2 motif. At 167 to 176 (RLKGDEARHT) the chain is on the cytoplasmic side. Intramembrane regions (helical) lie at residues 177-189 (LLATGAAAGLAAA) and 193-201 (PLAGILFII). At 202–214 (EEMRPQFRYTLIS) the chain is on the cytoplasmic side. A helical membrane pass occupies residues 215 to 232 (IKAVFIGVIMSTIMYRIF). Residues 233–252 (NHEVALIDVGKLSDAPLNTL) lie on the Periplasmic side of the membrane. A helical transmembrane segment spans residues 253–281 (WLYLILGIIFGIFGPIFNKWVLGMQDLLH). Topologically, residues 282–287 (RVHGGN) are cytoplasmic. Residues 288 to 309 (ITKWILMGGAIGGLCGLLGFVA) form a helical membrane-spanning segment. The Periplasmic segment spans residues 310–329 (PATSGGGFNLIPIATAGNFS). 2 consecutive transmembrane segments (helical) span residues 330-349 (MGMLVFIFVARVITTLLCFS) and 355-376 (GIFAPMLALGTVLGTAFGMVAV). A Selectivity filter part_3 motif is present at residues 355–359 (GIFAP). The chloride site is built by Ile-356 and Phe-357. Residues 377-386 (ELFPQYHLEA) lie on the Periplasmic side of the membrane. Positions 387–401 (GTFAIAGMGALLAAS) form an intramembrane region, helical. Residues 402–404 (IRA) constitute an intramembrane region (note=Loop between two helices). The segment at residues 405–416 (PLTGIILVLEMT) is an intramembrane region (helical). Positions 417 to 421 (DNYQL) form an intramembrane region, note=Loop between two helices. A helical transmembrane segment spans residues 422 to 438 (ILPMIITGLGATLLAQF). The Cytoplasmic segment spans residues 439-473 (TGGKPLYSAILARTLAKQEAEQLARSKAASASENT). Chloride is bound at residue Tyr-445.

Belongs to the chloride channel (TC 2.A.49) family. ClcA subfamily. In terms of assembly, homodimer.

It is found in the cell inner membrane. The catalysed reaction is 2 chloride(in) + H(+)(out) = 2 chloride(out) + H(+)(in). Proton-coupled chloride transporter. Functions as antiport system and exchanges two chloride ions for 1 proton. Probably acts as an electrical shunt for an outwardly-directed proton pump that is linked to amino acid decarboxylation, as part of the extreme acid resistance (XAR) response. This chain is H(+)/Cl(-) exchange transporter ClcA, found in Escherichia coli O9:H4 (strain HS).